We begin with the raw amino-acid sequence, 539 residues long: CTP synthase (539 aa).

The amidoligase domain stretch occupies residues 1-267 (MTKYIFVTGG…DQKVCDFLHI (267 aa)). Ser-13 contributes to the CTP binding site. Ser-13 contacts UTP. Residue 14–19 (SLGKGI) coordinates ATP. Residue Tyr-54 participates in L-glutamine binding. Residue Asp-71 participates in ATP binding. The Mg(2+) site is built by Asp-71 and Glu-141. Residues 148-150 (DME), 188-193 (KTKPTQ), and Lys-224 contribute to the CTP site. UTP contacts are provided by residues 188-193 (KTKPTQ) and Lys-224. The Glutamine amidotransferase type-1 domain maps to 294-537 (KITLVGKYVE…IGAASGLPEQ (244 aa)). Gly-356 contacts L-glutamine. Catalysis depends on Cys-383, which acts as the Nucleophile; for glutamine hydrolysis. L-glutamine contacts are provided by residues 384–387 (LGMQ), Glu-407, and Arg-465. Residues His-510 and Glu-512 contribute to the active site.

The protein belongs to the CTP synthase family. In terms of assembly, homotetramer.

The catalysed reaction is UTP + L-glutamine + ATP + H2O = CTP + L-glutamate + ADP + phosphate + 2 H(+). It catalyses the reaction L-glutamine + H2O = L-glutamate + NH4(+). The enzyme catalyses UTP + NH4(+) + ATP = CTP + ADP + phosphate + 2 H(+). The protein operates within pyrimidine metabolism; CTP biosynthesis via de novo pathway; CTP from UDP: step 2/2. With respect to regulation, allosterically activated by GTP, when glutamine is the substrate; GTP has no effect on the reaction when ammonia is the substrate. The allosteric effector GTP functions by stabilizing the protein conformation that binds the tetrahedral intermediate(s) formed during glutamine hydrolysis. Inhibited by the product CTP, via allosteric rather than competitive inhibition. Its function is as follows. Catalyzes the ATP-dependent amination of UTP to CTP with either L-glutamine or ammonia as the source of nitrogen. Regulates intracellular CTP levels through interactions with the four ribonucleotide triphosphates. The protein is CTP synthase of Lactobacillus helveticus (strain DPC 4571).